Here is a 522-residue protein sequence, read N- to C-terminus: Putative E3 ubiquitin-protein ligase RING1a (522 aa).

Residues 1 to 10 (MSVKNNSFSS) are compositionally biased toward polar residues. Residues 1–119 (MSVKNNSFSS…RSPSSISGDQ (119 aa)) are disordered. Basic and acidic residues predominate over residues 32–64 (LQEKDETKEEKEGDEEVKHDEAEEDQEVVKPND). The segment covering 65-106 (AEEDDDGDDAEEDEEEEVEAEEDEEAEEEEEEEEEEEEEEED) has biased composition (acidic residues). The RING-type zinc-finger motif lies at 136-176 (CPICLGIIKKTRTVMECLHRFCRECIDKSMRLGNNECPACR). Disordered stretches follow at residues 250-347 (VLMR…DTKG) and 363-385 (RGGT…KSVR). Basic and acidic residues predominate over residues 287-306 (NNNRGRDKDSSSDERGTEVR). Over residues 316 to 325 (SRSTQHPSSS) the composition is skewed to low complexity. 2 stretches are compositionally biased toward polar residues: residues 326–336 (GANKNNGNCAD) and 366–384 (TRSN…SKSV).

As to quaternary structure, homodimer or heterodimer with RING1B. Interacts with CLF. Component of the PRC1-like complex, at least composed of RING1A, RING1B and LHP1.

The protein resides in the nucleus. The enzyme catalyses S-ubiquitinyl-[E2 ubiquitin-conjugating enzyme]-L-cysteine + [acceptor protein]-L-lysine = [E2 ubiquitin-conjugating enzyme]-L-cysteine + N(6)-ubiquitinyl-[acceptor protein]-L-lysine.. Its pathway is protein modification; protein ubiquitination. Functionally, putative E3 ubiquitin-protein ligase that mediates monoubiquitination of 'Lys-119' of histone H2A (H2AK119ub), thereby playing a central role in histone code and gene regulation. Its function is as follows. As part of the PRC1-like complex, repress class I KNOX gene expression. PcG PRC1 complex maintains the transcriptionally repressive state of many genes, including Hox genes, throughout development. PcG PRC1 complex acts via chromatin remodeling and modification of histones, rendering chromatin heritably changed in its expressibility. The protein is Putative E3 ubiquitin-protein ligase RING1a (RING1A) of Arabidopsis thaliana (Mouse-ear cress).